The primary structure comprises 364 residues: Pre-mRNA-splicing factor SLT11 (364 aa).

The tract at residues 331–364 is disordered; it reads KSTDNAKNDKKKTSKKVHKDRSKKSKPRANKLTI. Residues 339–364 are compositionally biased toward basic residues; the sequence is DKKKTSKKVHKDRSKKSKPRANKLTI.

This sequence belongs to the SLT11 family. In terms of assembly, belongs to the CWC complex (or CEF1-associated complex), a spliceosome subcomplex composed of the U2, U5 and U6 snRNAs and at least BUD13, BUD31, BRR2, CDC40, CEF1, CLF1, CUS1, CWC2, CWC15, CWC21, CWC22, CWC23, CWC24, CWC25, CWC27, ECM2, HSH155, IST3, ISY1, LEA1, MSL1, NTC20, PRP8, PRP9, PRP11, PRP19, PRP21, PRP22, PRP45, PRP46, SLU7, SMB1, SMD1, SMD2, SMD3, SMX2, SMX3, SNT309, SNU114, SPP2, SYF1, SYF2, RSE1 and YJU2. Interacts with SLU7.

The protein localises to the nucleus. Involved in pre-mRNA splicing. Facilitates the cooperative formation of U2/U6 helix II in association with stem II in the spliceosome. Binds to RNA. The chain is Pre-mRNA-splicing factor SLT11 (ECM2) from Saccharomyces cerevisiae (strain ATCC 204508 / S288c) (Baker's yeast).